A 55-amino-acid chain; its full sequence is MSFEPSGPHSHRKPFGKGSRSCVSCYTFRGIIRKLMMCRRCFREYAGDIGFAIYD.

The tract at residues Met1–Arg20 is disordered. Residues Cys22, Cys25, Cys38, and Cys41 each coordinate Zn(2+).

The protein belongs to the universal ribosomal protein uS14 family. Requires Zn(2+) as cofactor.

This Encephalitozoon cuniculi (strain GB-M1) (Microsporidian parasite) protein is Small ribosomal subunit protein uS14 (RPS29).